A 1112-amino-acid polypeptide reads, in one-letter code: MPGVVMDNATVGGPRRASESPDNVSSTPFPQERVNQSGDSGDRRNRSIFHNGAVKGAQGPGQHIETHTGKDGINESEGLPELAHITQGFFPFSTLVNRSVQQCWNDLSELVTELAAIQVSPHGQMPSTPANGKAPGDQSPENLQKKTRILDFAHAKRAEFIKLLVLSQWSRQAGDVSRLIDLQNFIRNRHQAFMDALQRIGDMKRDLVQAQVANPDLKTALEVLSKGRVVSITDLGYEAPKQLTAKGALKRLHKINRIISARLALHDTIPRPFRTYRVHDGRATFVVQGEFELDLSVGEESKSSQFFFVDIRFLFSPSSHVPKGRLSNELDVQVNDRLRDNGLKGCFDFLHGLVLTNKITILFKQAVELARGLWSDVLRVELLHRTLVVQYWALKLGAKSWIEIGIKSGRKPHDVKDSGVPYLALRWIRDGQEVDSTSVEFDADDLSMERLLRSIIALHISHLLSATYSILNQRSLFATGLLSLQALLNTNEPGKCQLLAQLTVSRHLRVSIEPMSGAIVLSADPSPLDRSESDSSLEKSSVDDIVSRVSRLRCIAALEEAESTVKILGFETVSPRGLKADVRKILPPNILRFALFWHPFWDRSWIVAATSSTDGDSWWVIHLRRPSALATSALNLDKDIHREATVCSGHVISNTFLAVQHLARDSSFADLSHCLSGMVAIHANASYLADLRSVAFQPPLRALKFESGLEVPNLLVRYQVSTLPRALQLVFPAGVGKKDFIRNTVRVAFHGIDQRRKVVIFVAYGNLLVPMKELSTLVSKLDGSLVFKQEGDSFAIRLLAPAGQPVIVQLFESLQRLECMLSIFEFLRRKKLVIRSLSLSQVAFAYGPRRSLAAVMDIGMSKLSNSEQLDPVDILARTDPLLLLRLGIRFDHSNPHRRIQGSLAAILNHTSNKAALDSVAEILSFTLPAMRTLDQITSNLSRGEPARLQVVVRNAFTFLLHYINYALRFELTASQHAGRLTWVLRESGDPQVGPGQDQIRAKLRDTLYNSNGNGWKGLGNGVVADVEGVCSVISNLDTSFAGARDNQETSGDVKPTERSLNQTDVKNHRDHDFDAQAAMDYDTSAVATNSAGARSSQQCDAPPEAADVITID.

Disordered stretches follow at residues 1 to 76 (MPGV…INES), 120 to 141 (SPHGQMPSTPANGKAPGDQSPE), and 1088 to 1112 (TNSAGARSSQQCDAPPEAADVITID). Positions 20-39 (SPDNVSSTPFPQERVNQSGD) are enriched in polar residues. A compositionally biased stretch (basic and acidic residues) spans 64-73 (IETHTGKDGI). Residues 1088 to 1099 (TNSAGARSSQQC) show a composition bias toward polar residues.

It belongs to the Mediator complex subunit 14 family. In terms of assembly, component of the Mediator complex.

It localises to the nucleus. In terms of biological role, component of the Mediator complex, a coactivator involved in the regulated transcription of nearly all RNA polymerase II-dependent genes. Mediator functions as a bridge to convey information from gene-specific regulatory proteins to the basal RNA polymerase II transcription machinery. Mediator is recruited to promoters by direct interactions with regulatory proteins and serves as a scaffold for the assembly of a functional preinitiation complex with RNA polymerase II and the general transcription factors. This chain is Mediator of RNA polymerase II transcription subunit 14 (rgr1), found in Aspergillus clavatus (strain ATCC 1007 / CBS 513.65 / DSM 816 / NCTC 3887 / NRRL 1 / QM 1276 / 107).